Here is a 223-residue protein sequence, read N- to C-terminus: Rho-related protein racE (223 aa).

18–25 contacts GTP; that stretch reads GDGAVGKT. The Effector region motif lies at 40–48; it reads YVPTVFENY. Residues 65-69 and 123-126 contribute to the GTP site; these read DTAGQ and TKID. The interval 187–223 is disordered; sequence GMDKKSQDGSSSASGVPSGDKPTKGKAGKKKSGCIIL. Residues 210–223 show a composition bias toward basic residues; it reads KGKAGKKKSGCIIL. Cys-220 is modified (cysteine methyl ester). The S-geranylgeranyl cysteine moiety is linked to residue Cys-220. The propeptide at 221-223 is removed in mature form; sequence IIL.

Belongs to the small GTPase superfamily. Rho family. As to quaternary structure, interacts with rgaA.

The protein localises to the cell membrane. In terms of biological role, specifically required for cytokinesis. The protein is Rho-related protein racE (racE) of Dictyostelium discoideum (Social amoeba).